A 110-amino-acid polypeptide reads, in one-letter code: Guanine nucleotide-binding protein subunit gamma (110 aa).

C106 is lipidated: S-palmitoyl cysteine. C107 is subject to Cysteine methyl ester. C107 carries the S-farnesyl cysteine lipid modification. Residues 108 to 110 (TLM) constitute a propeptide, removed in mature form.

This sequence belongs to the G protein gamma family. As to quaternary structure, g proteins are composed of 3 units, alpha, beta and gamma. The beta-gamma subunit complex (STE4-STE18 complex) interacts with PLP1 and PLP2.

The protein resides in the membrane. Its function is as follows. Implicated in the pheromone A- and alpha-factor response pathway. The beta and gamma chains of the putative yeast mating response pathway G protein play a positive role in initiation of the mating response. The chain is Guanine nucleotide-binding protein subunit gamma (STE18) from Saccharomyces cerevisiae (strain ATCC 204508 / S288c) (Baker's yeast).